The sequence spans 272 residues: Digeranylgeranylglyceryl phosphate synthase (272 aa).

The next 8 membrane-spanning stretches (helical) occupy residues 16–36, 79–99, 100–120, 124–144, 148–168, 194–214, 217–237, and 252–272; these read AFIA…EIIL, ALYY…IISL, ENGI…YDLK, FIGN…GGLI, VNLG…REII, AVML…LLYY, IFSI…VYSA, and ISKY…MGAL.

It belongs to the UbiA prenyltransferase family. DGGGP synthase subfamily. The cofactor is Mg(2+).

Its subcellular location is the cell membrane. The enzyme catalyses sn-3-O-(geranylgeranyl)glycerol 1-phosphate + (2E,6E,10E)-geranylgeranyl diphosphate = 2,3-bis-O-(geranylgeranyl)-sn-glycerol 1-phosphate + diphosphate. It functions in the pathway membrane lipid metabolism; glycerophospholipid metabolism. In terms of biological role, prenyltransferase that catalyzes the transfer of the geranylgeranyl moiety of geranylgeranyl diphosphate (GGPP) to the C2 hydroxyl of (S)-3-O-geranylgeranylglyceryl phosphate (GGGP). This reaction is the second ether-bond-formation step in the biosynthesis of archaeal membrane lipids. The chain is Digeranylgeranylglyceryl phosphate synthase from Methanosphaera stadtmanae (strain ATCC 43021 / DSM 3091 / JCM 11832 / MCB-3).